Consider the following 206-residue polypeptide: Uridine kinase (206 aa).

11-18 (GGTGSGKS) is a binding site for ATP.

The protein belongs to the uridine kinase family.

It is found in the cytoplasm. It carries out the reaction uridine + ATP = UMP + ADP + H(+). The enzyme catalyses cytidine + ATP = CMP + ADP + H(+). It participates in pyrimidine metabolism; CTP biosynthesis via salvage pathway; CTP from cytidine: step 1/3. It functions in the pathway pyrimidine metabolism; UMP biosynthesis via salvage pathway; UMP from uridine: step 1/1. In Clostridium botulinum (strain Kyoto / Type A2), this protein is Uridine kinase.